The sequence spans 387 residues: ATP phosphoribosyltransferase regulatory subunit (387 aa).

Belongs to the class-II aminoacyl-tRNA synthetase family. HisZ subfamily. As to quaternary structure, heteromultimer composed of HisG and HisZ subunits.

The protein resides in the cytoplasm. It functions in the pathway amino-acid biosynthesis; L-histidine biosynthesis; L-histidine from 5-phospho-alpha-D-ribose 1-diphosphate: step 1/9. Functionally, required for the first step of histidine biosynthesis. May allow the feedback regulation of ATP phosphoribosyltransferase activity by histidine. This Methylobacillus flagellatus (strain ATCC 51484 / DSM 6875 / VKM B-1610 / KT) protein is ATP phosphoribosyltransferase regulatory subunit.